We begin with the raw amino-acid sequence, 87 residues long: MANIKSAKKRAIQSEKARKIIASRRSMMRPFIKKGDAAIEAGDKAAAQKAFNEMQPIVDRQAAKGLIHKNKAARHKANLTAQINKLA.

The protein belongs to the bacterial ribosomal protein bS20 family.

In terms of biological role, binds directly to 16S ribosomal RNA. This chain is Small ribosomal subunit protein bS20, found in Shigella flexneri.